A 546-amino-acid chain; its full sequence is Phosphomethylpyrimidine synthase (546 aa).

Residues Asn145, Met174, Tyr203, His239, 259–261, 300–303, and Glu339 contribute to the substrate site; these read SRG and DGLR. Residue His343 participates in Zn(2+) binding. Tyr366 is a substrate binding site. Residue His407 participates in Zn(2+) binding. [4Fe-4S] cluster contacts are provided by Cys487, Cys490, and Cys495.

It belongs to the ThiC family. It depends on [4Fe-4S] cluster as a cofactor.

The enzyme catalyses 5-amino-1-(5-phospho-beta-D-ribosyl)imidazole + S-adenosyl-L-methionine = 4-amino-2-methyl-5-(phosphooxymethyl)pyrimidine + CO + 5'-deoxyadenosine + formate + L-methionine + 3 H(+). It participates in cofactor biosynthesis; thiamine diphosphate biosynthesis. In terms of biological role, catalyzes the synthesis of the hydroxymethylpyrimidine phosphate (HMP-P) moiety of thiamine from aminoimidazole ribotide (AIR) in a radical S-adenosyl-L-methionine (SAM)-dependent reaction. This chain is Phosphomethylpyrimidine synthase, found in Mycobacterium marinum (strain ATCC BAA-535 / M).